The primary structure comprises 366 residues: cAMP-dependent protein kinase regulatory subunit (366 aa).

Residues Met1–Leu121 form a dimerization and phosphorylation region. Positions Gln55–Ser87 are disordered. The Pseudophosphorylation motif signature appears at Arg82–Ile86. The residue at position 87 (Ser87) is a Phosphoserine. 3',5'-cyclic AMP is bound by residues Leu122–Gln239, Glu187, Arg196, Ile240–Thr366, Glu311, and Arg320.

The protein belongs to the cAMP-dependent kinase regulatory chain family. In terms of assembly, tetramer, composed of 2 regulatory (R) and 2 catalytic (C) subunits. In the presence of cAMP it dissociates into 2 active monomeric C subunits and an R dimer that binds four cAMP molecules. In terms of processing, the pseudophosphorylation site binds to the substrate-binding region of the catalytic chain but is not phosphorylated. The physiological significance of phosphorylations by other kinases is unclear.

It localises to the cytoplasm. The protein resides in the cytosol. Controls the rhythmic contraction of enteric muscles probably by regulating G-protein coupled receptor aex-2-mediated calcium influx in GABAergic DVB neurons. This Caenorhabditis elegans protein is cAMP-dependent protein kinase regulatory subunit (kin-2).